We begin with the raw amino-acid sequence, 84 residues long: Apoptosis inhibitor Rv3654c (84 aa).

The signal sequence occupies residues 1–39 (MVARHRAQAAADLASLAAAARLPSGLAAACARATLVARA).

Interacts with human polypyrimidine tract binding protein-associated splicing factor (PSF).

It is found in the secreted. The protein resides in the host cytoplasm. Functionally, effector protein that participates in the suppression of macrophage apoptosis by blocking the extrinsic pathway. Recognizes the host polypyrimidine tract binding protein-associated splicing factor (PSF), which probably leads to its cleavage, diminishing the level of caspase-8 in macrophages. The polypeptide is Apoptosis inhibitor Rv3654c (Mycobacterium tuberculosis (strain ATCC 25618 / H37Rv)).